The chain runs to 100 residues: MYB-like transcription factor TCL2 (100 aa).

The 38-residue stretch at 37–74 folds into the Myb-like domain; that stretch reads TEQEEDLIFRMHRLVGDRWDLIAGRVVGREAKDIERYW.

Interacts with GL3. As to expression, expressed in cotyledons, petioles, rosette leaves, hydathodes, cauline leaves, stems, pedicels and flower buds.

Its subcellular location is the nucleus. MYB-type transcription factor involved in trichome cell specification. Acts as a negative regulator of trichome patterning and formation. May function by suppressing the expression of GL3. This Arabidopsis thaliana (Mouse-ear cress) protein is MYB-like transcription factor TCL2 (TCL2).